Here is a 165-residue protein sequence, read N- to C-terminus: UPF0303 protein BTH_I2506 (165 aa).

This sequence belongs to the UPF0303 family.

The sequence is that of UPF0303 protein BTH_I2506 from Burkholderia thailandensis (strain ATCC 700388 / DSM 13276 / CCUG 48851 / CIP 106301 / E264).